A 155-amino-acid polypeptide reads, in one-letter code: MRRRRAEIRQVPPDPVYGDVLVAKLINKVMWDGKKTTAQKIVYGAFDIIREKTKKDPLEVFRQAVENVKPVLEVRPRRVGGATYQVPIEVQEPRRTSLALRWIVEAARARKGRPMKEKLAEEIIAAYNNTGTAIKKKEDTHRMAEANRAFAHYRW.

The protein belongs to the universal ribosomal protein uS7 family. As to quaternary structure, part of the 30S ribosomal subunit. Contacts proteins S9 and S11.

Functionally, one of the primary rRNA binding proteins, it binds directly to 16S rRNA where it nucleates assembly of the head domain of the 30S subunit. Is located at the subunit interface close to the decoding center, probably blocks exit of the E-site tRNA. This is Small ribosomal subunit protein uS7 from Thermotoga petrophila (strain ATCC BAA-488 / DSM 13995 / JCM 10881 / RKU-1).